A 384-amino-acid polypeptide reads, in one-letter code: Autophagy-related protein 30 (384 aa).

Residues 1–63 (MFSRKQVQKR…ASPGQLRPRT (63 aa)) form a disordered region. Over residues 13 to 27 (ELSSLHCSNSSNSLN) the composition is skewed to low complexity. Positions 45-63 (RGNNRSDNVASPGQLRPRT) are enriched in polar residues. Phosphoserine is present on Ser112. The segment at 266-291 (VKHDKPSSPLPNYHNTLKQAPSSNSQ) is disordered. Residues 278 to 291 (YHNTLKQAPSSNSQ) are compositionally biased toward polar residues.

In terms of assembly, interacts with ATG11, ATG17, ATG37, PEX3 and PEX14. Post-translationally, phosphorylation at Ser-112 is required for micro- and macropexophagy.

The protein resides in the vacuole lumen. The protein localises to the preautophagosomal structure. It localises to the peroxisome membrane. Its function is as follows. Acts as the peroxisome receptor for pexophagy. Required for both micropexophagy and macropexophagy, but not for the cytoplasm to vacuole transport (Cvt) or autophagy pathways. Required for functional micropexophagic apparatus (MIPA) and relocation of ATG11 to the peroxisome-sequestering arms of the vacuole. In Komagataella phaffii (strain GS115 / ATCC 20864) (Yeast), this protein is Autophagy-related protein 30 (ATG30).